The sequence spans 219 residues: MLITFEGIDGAGKSTQIKKLQTVLNKAGVESVTLREPGGTEVAEKIRSILLESRHEISAVGELLLFSATRAELVQQVIIPALQTDAVVILDRFYDSTRAYQGYGRGIDLTILETIIAFSTFNLIPDVTFYLDIKPEDAMIRKNSKKSLPLAFENSDLDRMERSGLEFYSKVRNGYFEIIRSEQHRFKVLNALEHPDDLHRQILETLRKKKPALKALNRY.

Position 7–14 (7–14 (GIDGAGKS)) interacts with ATP.

The protein belongs to the thymidylate kinase family.

It carries out the reaction dTMP + ATP = dTDP + ADP. Phosphorylation of dTMP to form dTDP in both de novo and salvage pathways of dTTP synthesis. This chain is Thymidylate kinase, found in Chlorobium phaeobacteroides (strain DSM 266 / SMG 266 / 2430).